The following is a 225-amino-acid chain: Membrane-spanning 4-domains subfamily A member 4D (225 aa).

Residues 1–42 (MQGLAQTTMAVVPGGAPPSENSVIKSQMWNKNKEKFLKGEPK) are Cytoplasmic-facing. A helical membrane pass occupies residues 43-63 (VLGAIQVMIAFINFSLGIIII). The Extracellular segment spans residues 64–73 (LNRVSERFMS). A helical membrane pass occupies residues 74–94 (VLLLAPFWGSIMFIFSGSLSI). Topologically, residues 95-113 (AAGVKPTKAMIISSLSVNT) are cytoplasmic. A helical transmembrane segment spans residues 114–134 (ISSVLAVAASIIGVISVISGV). Residues 135–148 (FRQFRSQPAIASLD) are Extracellular-facing. A helical transmembrane segment spans residues 149–169 (VLMTILNMLEFCIAVSVSAFG). At 170–225 (CKASCCNSSEVLVVLPSNSAVTVTAPPMILQPLPPSECQGKNVPENLYRNQPGEIV) the chain is on the cytoplasmic side.

It belongs to the MS4A family. Expressed in thymus, spleen, peripheral lymph node, liver, kidney, heart, colon, lung, and testes.

The protein localises to the membrane. Its function is as follows. May be involved in signal transduction as a component of a multimeric receptor complex. In Mus musculus (Mouse), this protein is Membrane-spanning 4-domains subfamily A member 4D (Ms4a4d).